The following is a 54-amino-acid chain: Large ribosomal subunit protein bL33 (54 aa).

It belongs to the bacterial ribosomal protein bL33 family.

The sequence is that of Large ribosomal subunit protein bL33 from Roseiflexus castenholzii (strain DSM 13941 / HLO8).